A 205-amino-acid chain; its full sequence is ATP synthase subunit b (205 aa).

The helical transmembrane segment at 45-65 (LGMTATAWVSLAMVIVILLLL) threads the bilayer.

Belongs to the ATPase B chain family. F-type ATPases have 2 components, F(1) - the catalytic core - and F(0) - the membrane proton channel. F(1) has five subunits: alpha(3), beta(3), gamma(1), delta(1), epsilon(1). F(0) has three main subunits: a(1), b(2) and c(10-14). The alpha and beta chains form an alternating ring which encloses part of the gamma chain. F(1) is attached to F(0) by a central stalk formed by the gamma and epsilon chains, while a peripheral stalk is formed by the delta and b chains.

The protein resides in the cell inner membrane. In terms of biological role, f(1)F(0) ATP synthase produces ATP from ADP in the presence of a proton or sodium gradient. F-type ATPases consist of two structural domains, F(1) containing the extramembraneous catalytic core and F(0) containing the membrane proton channel, linked together by a central stalk and a peripheral stalk. During catalysis, ATP synthesis in the catalytic domain of F(1) is coupled via a rotary mechanism of the central stalk subunits to proton translocation. Component of the F(0) channel, it forms part of the peripheral stalk, linking F(1) to F(0). This chain is ATP synthase subunit b, found in Rhizorhabdus wittichii (strain DSM 6014 / CCUG 31198 / JCM 15750 / NBRC 105917 / EY 4224 / RW1) (Sphingomonas wittichii).